A 395-amino-acid polypeptide reads, in one-letter code: Protein TAMALIN (395 aa).

The interval 1–52 (MTLRRLRKLQQKEEAAATPDPAARTPDSEVAPAAPVPTPGPPAAAATPGPPA) is disordered. Positions 16 to 33 (AATPDPAARTPDSEVAPA) are enriched in low complexity. Threonine 77 is subject to Phosphothreonine. Serine 94 is modified (phosphoserine). In terms of domain architecture, PDZ spans 101 to 190 (VLTLEKEDNQ…VLRLETLYGT (90 aa)). An interaction with PSCD3 region spans residues 181-258 (VLRLETLYGT…GAGLLPGSLP (78 aa)). Tyrosine 237 carries the phosphotyrosine modification. At arginine 270 the chain carries Omega-N-methylarginine. The segment at 293 to 349 (SEPPALPPPPPPARAFGPGPAETPAVGPGPGPRAALSRSASVRCAGPGGGGGGGAPG) is disordered. Pro residues predominate over residues 296-305 (PALPPPPPPA). Positions 338–348 (GPGGGGGGGAP) are enriched in gly residues. Residue serine 387 is modified to Phosphoserine.

As to quaternary structure, heteromer. Composed of TAMALIN, CYTH2 and at least one GRM1. Also interacts with CYTH3, GRM2, GRM3 and GRM5.

Its subcellular location is the cytoplasm. It localises to the perinuclear region. It is found in the cell membrane. The protein resides in the postsynaptic cell membrane. In terms of biological role, plays a role in intracellular trafficking and contributes to the macromolecular organization of group 1 metabotropic glutamate receptors (mGluRs) at synapses. This Homo sapiens (Human) protein is Protein TAMALIN.